A 238-amino-acid chain; its full sequence is uncharacterized protein (238 aa).

It belongs to the HyuE racemase family.

This is an uncharacterized protein from Schizosaccharomyces pombe (strain 972 / ATCC 24843) (Fission yeast).